The primary structure comprises 338 residues: Ketol-acid reductoisomerase (NADP(+)) (338 aa).

Positions 1–181 (MKVYYDKDAD…GGTKGGVIET (181 aa)) constitute a KARI N-terminal Rossmann domain. Residues 24–27 (YGSQ), R47, S52, and 82–85 (DESQ) each bind NADP(+). H107 is a catalytic residue. Residue G133 coordinates NADP(+). Residues 182–327 (NFREETETDL…AELRAMMPWI (146 aa)) form the KARI C-terminal knotted domain. Mg(2+) contacts are provided by D190, E194, E226, and E230. Residue S251 coordinates substrate.

It belongs to the ketol-acid reductoisomerase family. It depends on Mg(2+) as a cofactor.

It carries out the reaction (2R)-2,3-dihydroxy-3-methylbutanoate + NADP(+) = (2S)-2-acetolactate + NADPH + H(+). It catalyses the reaction (2R,3R)-2,3-dihydroxy-3-methylpentanoate + NADP(+) = (S)-2-ethyl-2-hydroxy-3-oxobutanoate + NADPH + H(+). The protein operates within amino-acid biosynthesis; L-isoleucine biosynthesis; L-isoleucine from 2-oxobutanoate: step 2/4. Its pathway is amino-acid biosynthesis; L-valine biosynthesis; L-valine from pyruvate: step 2/4. Functionally, involved in the biosynthesis of branched-chain amino acids (BCAA). Catalyzes an alkyl-migration followed by a ketol-acid reduction of (S)-2-acetolactate (S2AL) to yield (R)-2,3-dihydroxy-isovalerate. In the isomerase reaction, S2AL is rearranged via a Mg-dependent methyl migration to produce 3-hydroxy-3-methyl-2-ketobutyrate (HMKB). In the reductase reaction, this 2-ketoacid undergoes a metal-dependent reduction by NADPH to yield (R)-2,3-dihydroxy-isovalerate. This Chromobacterium violaceum (strain ATCC 12472 / DSM 30191 / JCM 1249 / CCUG 213 / NBRC 12614 / NCIMB 9131 / NCTC 9757 / MK) protein is Ketol-acid reductoisomerase (NADP(+)).